A 250-amino-acid chain; its full sequence is Anamorsin homolog 2 (250 aa).

The segment at 1 to 102 (MNLKITINQQ…QTKKINIPQQ (102 aa)) is N-terminal SAM-like domain. A linker region spans residues 102 to 149 (QDFNNCYGKYDYIEQKFQNQINFFKQVDLKGNQETIDENELLNDGVEV). [2Fe-2S] cluster-binding residues include cysteine 155, cysteine 162, cysteine 165, and cysteine 167. The tract at residues 155–167 (CASKPRACANCTC) is fe-S binding site A. Residues cysteine 193, cysteine 196, cysteine 204, and cysteine 207 each coordinate [4Fe-4S] cluster. 2 short sequence motifs (cx2C motif) span residues 193–196 (CGSC) and 204–207 (CANC). The tract at residues 193–207 (CGSCYLGDAFRCANC) is fe-S binding site B.

It belongs to the anamorsin family. As to quaternary structure, monomer. The cofactor is [2Fe-2S] cluster. It depends on [4Fe-4S] cluster as a cofactor.

It is found in the cytoplasm. It localises to the mitochondrion intermembrane space. Its function is as follows. Component of the cytosolic iron-sulfur (Fe-S) protein assembly (CIA) machinery. Required for the maturation of extramitochondrial Fe-S proteins. Part of an electron transfer chain functioning in an early step of cytosolic Fe-S biogenesis, facilitating the de novo assembly of a [4Fe-4S] cluster on the cytosolic Fe-S scaffold complex. Electrons are transferred from NADPH via a FAD- and FMN-containing diflavin oxidoreductase. Together with the diflavin oxidoreductase, also required for the assembly of the diferric tyrosyl radical cofactor of ribonucleotide reductase (RNR), probably by providing electrons for reduction during radical cofactor maturation in the catalytic small subunit. The polypeptide is Anamorsin homolog 2 (Paramecium tetraurelia).